The primary structure comprises 138 residues: Low molecular weight protein-tyrosine-phosphatase PtpB (138 aa).

Catalysis depends on C7, which acts as the Nucleophile. R13 is an active-site residue. D111 acts as the Proton donor in catalysis.

It belongs to the low molecular weight phosphotyrosine protein phosphatase family.

It carries out the reaction O-phospho-L-tyrosyl-[protein] + H2O = L-tyrosyl-[protein] + phosphate. Dephosphorylates the phosphotyrosine-containing proteins. The polypeptide is Low molecular weight protein-tyrosine-phosphatase PtpB (ptpB) (Staphylococcus haemolyticus (strain JCSC1435)).